A 635-amino-acid polypeptide reads, in one-letter code: MIDSARYPRLARIQTPDDLRTFDESELRAVADELRAYLIESVGKSGGHFAAGLGVIELTVALHYLYQTPVDQLVWDVGHQTYPHKILTGRRDQIHTVKQKDGVAPFPKREESEYDTFGVGHSSTSISAALGMAIARQSEGDDRKIVAVIGDGAMTAGMAFEALMHAGGMDPEPNLLVILNDNNMSISEAVGGLTKMLGRATGSRTLNALREGGKKILGDKKNNPARFVKRWEEHWKGMFVPSTMFEEMGFHYTGPIDGHDMPALLSTLKTLRASKGPKLLHVMTTKGKGYEPAEGDQIGYHAVGPFDPDKGLVAKAGAKKPTYTDVFSDWLCDAAAAEPRLYGITPAMREGSGLVRFSKEYPQRYFDVAIAEQHAVTLAAGMATQGGKPVVAIYSTFLQRAYDQLVHDVAIQDLDVLFAIDRAGVVGPDGATHAGNLDLSFLRCVPNLVVMAPSNEAECRQMLSTGLQHPGPAAVRYPRGTGTGVAAGTDLSTLPIGKGELRLQGSRIALLAFGSTVAAAEQVGRELGLSVVNMRFIKPLDRELVLAVAAQHEGLVTIEDNVVAGGAGSGVGELLNAEGVLRPILHLGLPDSYQHHASREDLLAEAGIDAAGIRAAVLKRWPQLVTGTPPLSAAG.

Thiamine diphosphate-binding positions include His-79 and 120–122 (GHS). Asp-151 is a binding site for Mg(2+). Thiamine diphosphate contacts are provided by residues 152–153 (GA), Asn-182, Tyr-290, and Glu-372. Position 182 (Asn-182) interacts with Mg(2+).

The protein belongs to the transketolase family. DXPS subfamily. Homodimer. Mg(2+) is required as a cofactor. The cofactor is thiamine diphosphate.

It catalyses the reaction D-glyceraldehyde 3-phosphate + pyruvate + H(+) = 1-deoxy-D-xylulose 5-phosphate + CO2. Its pathway is metabolic intermediate biosynthesis; 1-deoxy-D-xylulose 5-phosphate biosynthesis; 1-deoxy-D-xylulose 5-phosphate from D-glyceraldehyde 3-phosphate and pyruvate: step 1/1. Catalyzes the acyloin condensation reaction between C atoms 2 and 3 of pyruvate and glyceraldehyde 3-phosphate to yield 1-deoxy-D-xylulose-5-phosphate (DXP). This Stenotrophomonas maltophilia (strain K279a) protein is 1-deoxy-D-xylulose-5-phosphate synthase.